Here is a 501-residue protein sequence, read N- to C-terminus: Glutamate--tRNA ligase (501 aa).

The short motif at 11-21 is the 'HIGH' region element; sequence PSPTGPLHIGG. A 'KMSKS' region motif is present at residues 260 to 264; it reads KLSKR. ATP is bound at residue Lys263.

It belongs to the class-I aminoacyl-tRNA synthetase family. Glutamate--tRNA ligase type 1 subfamily. In terms of assembly, monomer.

The protein resides in the cytoplasm. The catalysed reaction is tRNA(Glu) + L-glutamate + ATP = L-glutamyl-tRNA(Glu) + AMP + diphosphate. Its function is as follows. Catalyzes the attachment of glutamate to tRNA(Glu) in a two-step reaction: glutamate is first activated by ATP to form Glu-AMP and then transferred to the acceptor end of tRNA(Glu). This Flavobacterium johnsoniae (strain ATCC 17061 / DSM 2064 / JCM 8514 / BCRC 14874 / CCUG 350202 / NBRC 14942 / NCIMB 11054 / UW101) (Cytophaga johnsonae) protein is Glutamate--tRNA ligase.